A 284-amino-acid polypeptide reads, in one-letter code: MSNEISRNWPAPAKLNLFLHINGRRADGYHELQTLFQFIDCCDLLDFRVTQTPELILHSDMSAVVADSDNLILRAAKSLQQATGYPGGAEIWLEKRLPMGGGLGGGSSDAATTLVALNQLWNTQLSNDELATIGLKLGADIPVFIRGFAAFAEGVGERLQAVTPTEFWYLVIAPDAHVSTAAVFQDPLLPRNTPKLGIDTLMSQPWANDCQDLVVSKYPQVAKALGWLLEYAPSRMTGTGACVFGEFSSQQQALAALAKLPSDMQGFVAKGMNISPLIVRLNHP.

K14 is an active-site residue. 98–108 is a binding site for ATP; it reads PMGGGLGGGSS. Residue D140 is part of the active site.

The protein belongs to the GHMP kinase family. IspE subfamily.

The catalysed reaction is 4-CDP-2-C-methyl-D-erythritol + ATP = 4-CDP-2-C-methyl-D-erythritol 2-phosphate + ADP + H(+). It participates in isoprenoid biosynthesis; isopentenyl diphosphate biosynthesis via DXP pathway; isopentenyl diphosphate from 1-deoxy-D-xylulose 5-phosphate: step 3/6. Its function is as follows. Catalyzes the phosphorylation of the position 2 hydroxy group of 4-diphosphocytidyl-2C-methyl-D-erythritol. This Shewanella sp. (strain MR-7) protein is 4-diphosphocytidyl-2-C-methyl-D-erythritol kinase.